The sequence spans 370 residues: Serine/threonine-protein kinase RIM11/MSD1 (370 aa).

Residues 39–322 (FPTTEVVGHG…ALQCLCSPYF (284 aa)) form the Protein kinase domain. Residues 45-53 (VGHGSFGVV) and Lys68 contribute to the ATP site. Asp164 acts as the Proton acceptor in catalysis. Tyr199 is subject to Phosphotyrosine.

It belongs to the protein kinase superfamily. CMGC Ser/Thr protein kinase family. GSK-3 subfamily. In terms of assembly, interacts with TDA1.

It carries out the reaction L-seryl-[protein] + ATP = O-phospho-L-seryl-[protein] + ADP + H(+). It catalyses the reaction L-threonyl-[protein] + ATP = O-phospho-L-threonyl-[protein] + ADP + H(+). Its function is as follows. Serine/threonine protein kinase that is thought to function in regulating kinetochore activity and entry into meiosis. Could phosphorylate IME1. This Saccharomyces cerevisiae (strain ATCC 204508 / S288c) (Baker's yeast) protein is Serine/threonine-protein kinase RIM11/MSD1 (RIM11).